A 128-amino-acid chain; its full sequence is Sulfurtransferase TusD (128 aa).

Residue Cys-78 is the Cysteine persulfide intermediate of the active site.

Belongs to the DsrE/TusD family. In terms of assembly, heterohexamer, formed by a dimer of trimers. The hexameric TusBCD complex contains 2 copies each of TusB, TusC and TusD. The TusBCD complex interacts with TusE.

Its subcellular location is the cytoplasm. Functionally, part of a sulfur-relay system required for 2-thiolation of 5-methylaminomethyl-2-thiouridine (mnm(5)s(2)U) at tRNA wobble positions. Accepts sulfur from TusA and transfers it in turn to TusE. In Citrobacter koseri (strain ATCC BAA-895 / CDC 4225-83 / SGSC4696), this protein is Sulfurtransferase TusD.